The sequence spans 609 residues: UvrABC system protein C (609 aa).

The GIY-YIG domain maps to 16 to 94 (SSPGVYRMYD…IKQYMPKYNV (79 aa)). Residues 203 to 238 (QQVMSVLVQKMEQASSDMRYEQAALYRDQITALRRV) enclose the UVR domain.

It belongs to the UvrC family. In terms of assembly, interacts with UvrB in an incision complex.

The protein resides in the cytoplasm. In terms of biological role, the UvrABC repair system catalyzes the recognition and processing of DNA lesions. UvrC both incises the 5' and 3' sides of the lesion. The N-terminal half is responsible for the 3' incision and the C-terminal half is responsible for the 5' incision. This Shewanella pealeana (strain ATCC 700345 / ANG-SQ1) protein is UvrABC system protein C.